A 596-amino-acid chain; its full sequence is Nucleotidyltransferase lcsQ (596 aa).

Residues 1 to 22 (MLLRLSPSRMALKRKLDSFLRN) constitute a mitochondrion transit peptide. The interval 475-504 (IVAHPGKPSQPADVPETPLSSGASKSKNLD) is disordered.

It belongs to the tRNA nucleotidyltransferase/poly(A) polymerase family.

It is found in the mitochondrion. In terms of biological role, nucleotidyltransferase; part of the gene cluster that mediates the biosynthesis of the lipopeptide antibiotics leucinostatins that show extensive biological activities, including antimalarial, antiviral, antibacterial, antifungal, and antitumor activities, as well as phytotoxic. The function of lcsQ within the leucinostatins biosynthesis has not been identified yet. In Purpureocillium lilacinum (Paecilomyces lilacinus), this protein is Nucleotidyltransferase lcsQ.